A 203-amino-acid chain; its full sequence is Protein GrpE (203 aa).

A compositionally biased stretch (basic and acidic residues) spans Met1–Met20. The interval Met1–Ala38 is disordered.

Belongs to the GrpE family. Homodimer.

It is found in the cytoplasm. Functionally, participates actively in the response to hyperosmotic and heat shock by preventing the aggregation of stress-denatured proteins, in association with DnaK and GrpE. It is the nucleotide exchange factor for DnaK and may function as a thermosensor. Unfolded proteins bind initially to DnaJ; upon interaction with the DnaJ-bound protein, DnaK hydrolyzes its bound ATP, resulting in the formation of a stable complex. GrpE releases ADP from DnaK; ATP binding to DnaK triggers the release of the substrate protein, thus completing the reaction cycle. Several rounds of ATP-dependent interactions between DnaJ, DnaK and GrpE are required for fully efficient folding. This Proteus mirabilis (strain HI4320) protein is Protein GrpE.